We begin with the raw amino-acid sequence, 669 residues long: DNA ligase (669 aa).

Residues 32–36 (DAEYD), 81–82 (SL), and E111 contribute to the NAD(+) site. K113 serves as the catalytic N6-AMP-lysine intermediate. NAD(+)-binding residues include R134, E171, K290, and K314. Residues C408, C411, C426, and C432 each coordinate Zn(2+). The BRCT domain maps to 591-669 (EEALSLKGQT…EAELLAILGS (79 aa)).

This sequence belongs to the NAD-dependent DNA ligase family. LigA subfamily. Mg(2+) is required as a cofactor. The cofactor is Mn(2+).

It catalyses the reaction NAD(+) + (deoxyribonucleotide)n-3'-hydroxyl + 5'-phospho-(deoxyribonucleotide)m = (deoxyribonucleotide)n+m + AMP + beta-nicotinamide D-nucleotide.. Its function is as follows. DNA ligase that catalyzes the formation of phosphodiester linkages between 5'-phosphoryl and 3'-hydroxyl groups in double-stranded DNA using NAD as a coenzyme and as the energy source for the reaction. It is essential for DNA replication and repair of damaged DNA. In Shewanella loihica (strain ATCC BAA-1088 / PV-4), this protein is DNA ligase.